Consider the following 158-residue polypeptide: Phosphopantetheine adenylyltransferase (158 aa).

Position 8 (Ser8) interacts with substrate. ATP is bound by residues 8–9 (SF) and His16. Positions 40, 72, and 86 each coordinate substrate. ATP-binding positions include 87-89 (GLR), Glu97, and 122-128 (HSFLSSS).

This sequence belongs to the bacterial CoaD family. As to quaternary structure, homohexamer. Mg(2+) serves as cofactor.

It localises to the cytoplasm. It carries out the reaction (R)-4'-phosphopantetheine + ATP + H(+) = 3'-dephospho-CoA + diphosphate. It functions in the pathway cofactor biosynthesis; coenzyme A biosynthesis; CoA from (R)-pantothenate: step 4/5. Functionally, reversibly transfers an adenylyl group from ATP to 4'-phosphopantetheine, yielding dephospho-CoA (dPCoA) and pyrophosphate. This is Phosphopantetheine adenylyltransferase from Prochlorococcus marinus (strain NATL2A).